Reading from the N-terminus, the 247-residue chain is Probable transcriptional regulatory protein DVU_2259 (247 aa).

The tract at residues 1-22 is disordered; sequence MAGHSKWANIQHRKGRQDAKRG.

It belongs to the TACO1 family.

It is found in the cytoplasm. This is Probable transcriptional regulatory protein DVU_2259 from Nitratidesulfovibrio vulgaris (strain ATCC 29579 / DSM 644 / CCUG 34227 / NCIMB 8303 / VKM B-1760 / Hildenborough) (Desulfovibrio vulgaris).